Reading from the N-terminus, the 345-residue chain is DNA-directed RNA polymerase subunit alpha (345 aa).

The tract at residues Met-1 to Glu-241 is alpha N-terminal domain (alpha-NTD). Residues Phe-257–Phe-345 are alpha C-terminal domain (alpha-CTD).

Belongs to the RNA polymerase alpha chain family. As to quaternary structure, homodimer. The RNAP catalytic core consists of 2 alpha, 1 beta, 1 beta' and 1 omega subunit. When a sigma factor is associated with the core the holoenzyme is formed, which can initiate transcription.

The catalysed reaction is RNA(n) + a ribonucleoside 5'-triphosphate = RNA(n+1) + diphosphate. Functionally, DNA-dependent RNA polymerase catalyzes the transcription of DNA into RNA using the four ribonucleoside triphosphates as substrates. The protein is DNA-directed RNA polymerase subunit alpha of Acidiphilium cryptum (strain JF-5).